A 196-amino-acid polypeptide reads, in one-letter code: Small ribosomal subunit protein uS4c (196 aa).

The tract at residues 15–36 is disordered; that stretch reads LGTLPGLTSKRPRSGSDLKNPL. Residues 89–150 enclose the S4 RNA-binding domain; the sequence is MRLDNILFRL…KQRSKALIQN (62 aa).

It belongs to the universal ribosomal protein uS4 family. In terms of assembly, part of the 30S ribosomal subunit. Contacts protein S5. The interaction surface between S4 and S5 is involved in control of translational fidelity.

The protein localises to the plastid. It is found in the chloroplast. In terms of biological role, one of the primary rRNA binding proteins, it binds directly to 16S rRNA where it nucleates assembly of the body of the 30S subunit. Functionally, with S5 and S12 plays an important role in translational accuracy. The protein is Small ribosomal subunit protein uS4c (rps4) of Yucca filamentosa (Bear-grass).